The following is a 338-amino-acid chain: Tryptophan--tRNA ligase (338 aa).

ATP-binding positions include 12–14 (QPT) and 20–21 (GN). Residues 13–21 (PTGDLHIGN) carry the 'HIGH' region motif. Aspartate 136 is a binding site for L-tryptophan. ATP-binding positions include 148 to 150 (GED), isoleucine 191, and 200 to 204 (KMSKS). Positions 200–204 (KMSKS) match the 'KMSKS' region motif.

Belongs to the class-I aminoacyl-tRNA synthetase family. As to quaternary structure, homodimer.

Its subcellular location is the cytoplasm. It carries out the reaction tRNA(Trp) + L-tryptophan + ATP = L-tryptophyl-tRNA(Trp) + AMP + diphosphate + H(+). Functionally, catalyzes the attachment of tryptophan to tRNA(Trp). The polypeptide is Tryptophan--tRNA ligase (Prochlorococcus marinus subsp. pastoris (strain CCMP1986 / NIES-2087 / MED4)).